A 396-amino-acid chain; its full sequence is Elongation factor Tu (396 aa).

The tr-type G domain maps to 10–206; sequence KPHCNIGTIG…NVDEYIPQPE (197 aa). Residues 19–26 form a G1 region; that stretch reads GHVDHGKT. Residue 19–26 coordinates GTP; that stretch reads GHVDHGKT. T26 contributes to the Mg(2+) binding site. The segment at 60–64 is G2; it reads GITIS. Residues 81 to 84 are G3; it reads DCPG. GTP is bound by residues 81-85 and 136-139; these read DCPGH and NKCD. The tract at residues 136–139 is G4; the sequence is NKCD. The G5 stretch occupies residues 174–176; that stretch reads SAL.

The protein belongs to the TRAFAC class translation factor GTPase superfamily. Classic translation factor GTPase family. EF-Tu/EF-1A subfamily. As to quaternary structure, monomer.

It is found in the cytoplasm. The enzyme catalyses GTP + H2O = GDP + phosphate + H(+). Its function is as follows. GTP hydrolase that promotes the GTP-dependent binding of aminoacyl-tRNA to the A-site of ribosomes during protein biosynthesis. The protein is Elongation factor Tu of Bradyrhizobium sp. (strain BTAi1 / ATCC BAA-1182).